The following is an 87-amino-acid chain: Small ribosomal subunit protein uS17 (87 aa).

Belongs to the universal ribosomal protein uS17 family. As to quaternary structure, part of the 30S ribosomal subunit.

In terms of biological role, one of the primary rRNA binding proteins, it binds specifically to the 5'-end of 16S ribosomal RNA. This Staphylococcus haemolyticus (strain JCSC1435) protein is Small ribosomal subunit protein uS17.